The chain runs to 279 residues: DegV domain-containing protein SP_1112 (279 aa).

Positions 4–277 (IKIVTDSSVT…ENAWAILIRY (274 aa)) constitute a DegV domain. Hexadecanoate-binding residues include T62 and S94.

May bind long-chain fatty acids, such as palmitate, and may play a role in lipid transport or fatty acid metabolism. This is DegV domain-containing protein SP_1112 from Streptococcus pneumoniae serotype 4 (strain ATCC BAA-334 / TIGR4).